We begin with the raw amino-acid sequence, 68 residues long: Urocalcin (68 aa).

The N-terminal stretch at 1 to 27 is a signal peptide; it reads MKASTLVVIFIVIFITISSFSIHDVQA. Positions 28-35 are excised as a propeptide; sequence SGVEKREQ. 3 disulfides stabilise this stretch: Cys-38-Cys-52, Cys-45-Cys-56, and Cys-51-Cys-67. The tract at residues 57-59 is essential for stimulation of [3H]ryanodine binding to RYR1; it reads KRR.

The protein belongs to the scorpion calcin family. Expressed by the venom gland.

It localises to the secreted. This toxin only weakly stabilizes ryanodine receptor 1 (RyR1) opening in a long-lasting subconductance state (55% of the full conductance state obtained only at high concentrations (1 uM)). In addition, it has been shown to dose-dependently stimulate ryanodine binding to RyR1 with the lowest activity of all calcins (EC(50)=376 nM). It also augments the bell-shaped calcium-[3H]ryanodine binding curve that is maximal at about 10 uM calcium concentration. It binds a different site as ryanodine. It acts synergistically with caffeine. In contrast to other calcins, it does not trigger calcium release from sarcoplasmic vesicles even at high concentration (1 uM). In vivo, intracerebroventricular injection into mice induces neurotoxic symptoms, followed by death. The sequence is that of Urocalcin from Urodacus yaschenkoi (Inland robust scorpion).